The primary structure comprises 375 residues: Succinyl-diaminopimelate desuccinylase (375 aa).

Residue H66 coordinates Zn(2+). The active site involves D68. D99 is a binding site for Zn(2+). E133 acts as the Proton acceptor in catalysis. 3 residues coordinate Zn(2+): E134, E162, and H348.

The protein belongs to the peptidase M20A family. DapE subfamily. Homodimer. It depends on Zn(2+) as a cofactor. Co(2+) is required as a cofactor.

The catalysed reaction is N-succinyl-(2S,6S)-2,6-diaminopimelate + H2O = (2S,6S)-2,6-diaminopimelate + succinate. The protein operates within amino-acid biosynthesis; L-lysine biosynthesis via DAP pathway; LL-2,6-diaminopimelate from (S)-tetrahydrodipicolinate (succinylase route): step 3/3. Functionally, catalyzes the hydrolysis of N-succinyl-L,L-diaminopimelic acid (SDAP), forming succinate and LL-2,6-diaminopimelate (DAP), an intermediate involved in the bacterial biosynthesis of lysine and meso-diaminopimelic acid, an essential component of bacterial cell walls. The chain is Succinyl-diaminopimelate desuccinylase from Salmonella agona (strain SL483).